The chain runs to 448 residues: Protein kinase C and casein kinase substrate in neurons protein 2 (448 aa).

The F-BAR domain occupies 11-282; sequence VEVSSDSFWE…NIKTADAVED (272 aa). A coiled-coil region spans residues 25 to 274; the sequence is KRTVKRIDDG…NIYRELEQNI (250 aa). The tract at residues 315 to 386 is disordered; sequence SRREKKKASD…DTNPFDEDTS (72 aa). The span at 329–358 shows a compositional bias: polar residues; the sequence is TGINQTGDQVSQPNKHSSVSSYEKNQSYPT. Positions 367 to 369 match the NPF1 motif; sequence NPF. The NPF2 motif lies at 379–381; the sequence is NPF. One can recognise an SH3 domain in the interval 388–448; sequence VMEVRVRALY…YPANYVEPIQ (61 aa).

Belongs to the PACSIN family. In terms of processing, phosphorylated on serine residues. In terms of tissue distribution, detected in intestine, cardiac muscle, lung and brain (at protein level). Expressed in all tissues tested, including, gizzard, liver, cardiac muscle, skeletal muscle and skin.

It is found in the cytoplasm. It localises to the cytoskeleton. The protein localises to the cytoplasmic vesicle membrane. The protein resides in the cell projection. Its subcellular location is the ruffle membrane. It is found in the early endosome. It localises to the recycling endosome membrane. The protein localises to the cell membrane. The protein resides in the membrane. Its subcellular location is the caveola. It is found in the cell junction. It localises to the focal adhesion. In terms of biological role, regulates the morphogenesis and endocytosis of caveolae. Lipid-binding protein that is able to promote the tubulation of the phosphatidic acid-containing membranes it preferentially binds. Plays a role in intracellular vesicle-mediated transport. Involved in the endocytosis of cell-surface receptors like the EGF receptor, contributing to its internalization in the absence of EGF stimulus. Essential for endothelial organization in sprouting angiogenesis, modulates CDH5-based junctions. Facilitates endothelial front-rear polarity during migration by recruiting EHD4 and MICALL1 to asymmetric adherens junctions between leader and follower cells. This chain is Protein kinase C and casein kinase substrate in neurons protein 2 (PACSIN2), found in Gallus gallus (Chicken).